The following is a 227-amino-acid chain: UPF0758 protein Dred_2549 (227 aa).

The MPN domain occupies 105–227 (IIRCPEDVCG…FTSLKSKGLI (123 aa)). Zn(2+) is bound by residues His-176, His-178, and Asp-189. Positions 176-189 (HNHPSGDPTPSRED) match the JAMM motif motif.

It belongs to the UPF0758 family.

The polypeptide is UPF0758 protein Dred_2549 (Desulforamulus reducens (strain ATCC BAA-1160 / DSM 100696 / MI-1) (Desulfotomaculum reducens)).